The sequence spans 268 residues: 3-deoxy-manno-octulosonate cytidylyltransferase (268 aa).

The protein belongs to the KdsB family.

It localises to the cytoplasm. It carries out the reaction 3-deoxy-alpha-D-manno-oct-2-ulosonate + CTP = CMP-3-deoxy-beta-D-manno-octulosonate + diphosphate. Its pathway is nucleotide-sugar biosynthesis; CMP-3-deoxy-D-manno-octulosonate biosynthesis; CMP-3-deoxy-D-manno-octulosonate from 3-deoxy-D-manno-octulosonate and CTP: step 1/1. It functions in the pathway bacterial outer membrane biogenesis; lipopolysaccharide biosynthesis. Its function is as follows. Activates KDO (a required 8-carbon sugar) for incorporation into bacterial lipopolysaccharide in Gram-negative bacteria. The chain is 3-deoxy-manno-octulosonate cytidylyltransferase from Psychrobacter arcticus (strain DSM 17307 / VKM B-2377 / 273-4).